Here is a 131-residue protein sequence, read N- to C-terminus: Structural protein ORF131 (131 aa).

It belongs to the viral ORF131/RIP family.

It localises to the virion. This is Structural protein ORF131 from Acidianus convivator (ATV).